The primary structure comprises 143 residues: Succinate dehydrogenase assembly factor 2, mitochondrial (143 aa).

It belongs to the SDHAF2 family. In terms of assembly, interacts with the flavoprotein subunit within the SDH catalytic dimer.

The protein localises to the mitochondrion matrix. In terms of biological role, plays an essential role in the assembly of succinate dehydrogenase (SDH), an enzyme complex (also referred to as respiratory complex II) that is a component of both the tricarboxylic acid (TCA) cycle and the mitochondrial electron transport chain, and which couples the oxidation of succinate to fumarate with the reduction of ubiquinone (coenzyme Q) to ubiquinol. Required for flavinylation (covalent attachment of FAD) of the flavoprotein subunit of the SDH catalytic dimer. The polypeptide is Succinate dehydrogenase assembly factor 2, mitochondrial (Schizosaccharomyces japonicus (strain yFS275 / FY16936) (Fission yeast)).